Consider the following 463-residue polypeptide: A-type ATP synthase subunit B (463 aa).

It belongs to the ATPase alpha/beta chains family. As to quaternary structure, has multiple subunits with at least A(3), B(3), C, D, E, F, H, I and proteolipid K(x).

It is found in the cell membrane. Functionally, component of the A-type ATP synthase that produces ATP from ADP in the presence of a proton gradient across the membrane. The B chain is a regulatory subunit. This chain is A-type ATP synthase subunit B, found in Desulfurococcus sp. (strain SY).